The chain runs to 112 residues: UPF0060 membrane protein CMS0846 (112 aa).

The next 4 membrane-spanning stretches (helical) occupy residues 6–26, 32–52, 61–81, and 87–107; these read VILF…IWQA, PFWW…IATL, ILAA…TVVD, and RWDV…MAAP.

This sequence belongs to the UPF0060 family.

It localises to the cell membrane. This is UPF0060 membrane protein CMS0846 from Clavibacter sepedonicus (Clavibacter michiganensis subsp. sepedonicus).